Consider the following 422-residue polypeptide: Histidine--tRNA ligase (422 aa).

The protein belongs to the class-II aminoacyl-tRNA synthetase family. Homodimer.

The protein localises to the cytoplasm. It carries out the reaction tRNA(His) + L-histidine + ATP = L-histidyl-tRNA(His) + AMP + diphosphate + H(+). The protein is Histidine--tRNA ligase of Lysinibacillus sphaericus (strain C3-41).